Consider the following 179-residue polypeptide: uncharacterized protein (179 aa).

Disordered stretches follow at residues leucine 26–aspartate 103 and lysine 136–asparagine 179. The span at glutamine 34 to arginine 61 shows a compositional bias: basic and acidic residues. Residues alanine 63–asparagine 79 are compositionally biased toward low complexity. 2 stretches are compositionally biased toward basic and acidic residues: residues alanine 82–aspartate 103 and glycine 158–asparagine 179.

This is an uncharacterized protein from Escherichia coli (strain K12).